The following is a 308-amino-acid chain: tRNA pseudouridine synthase B (308 aa).

Asp-46 functions as the Nucleophile in the catalytic mechanism.

This sequence belongs to the pseudouridine synthase TruB family. Type 1 subfamily.

The enzyme catalyses uridine(55) in tRNA = pseudouridine(55) in tRNA. Functionally, responsible for synthesis of pseudouridine from uracil-55 in the psi GC loop of transfer RNAs. The chain is tRNA pseudouridine synthase B from Marinomonas sp. (strain MWYL1).